Reading from the N-terminus, the 587-residue chain is Hatching enzyme (587 aa).

The signal sequence occupies residues 1–18 (MANSGLILLVMFMIHVTT). A propeptide spans 19-166 (VHNVPLPSTA…PRCGVPDVLP (148 aa)) (activation peptide). N-linked (GlcNAc...) asparagine glycans are attached at residues N64, N126, and N141. The short motif at 157 to 164 (PRCGVPDV) is the Cysteine switch element. Residues C159 and H283 each contribute to the Zn(2+) site. E284 is a catalytic residue. The Zn(2+) site is built by H287 and H293. A disordered region spans residues 325 to 382 (LYGSNSGSGTTTTTRRPTTTRATTTRRTTTTRATTTRATTTTTTSPSRPSPPRRACSG). A compositionally biased stretch (low complexity) spans 334–371 (TTTTTRRPTTTRATTTRRTTTTRATTTRATTTTTTSPS). C380 and C582 form a disulfide bridge. Hemopexin repeat units follow at residues 381-422 (SGSF…RFGF), 425-468 (PQNI…WVGL), 469-513 (PCNI…FNDV), and 518-570 (HDGV…IPQC). N-linked (GlcNAc...) asparagine glycosylation is present at N584.

Belongs to the peptidase M10A family. Zn(2+) is required as a cofactor.

It carries out the reaction Hydrolysis of proteins of the fertilization envelope and dimethylcasein.. Functionally, allows the sea urchin to digest the protective envelope derived from the egg extracellular matrix; thus allowing the sea urchin to swim freely. This is Hatching enzyme from Paracentrotus lividus (Common sea urchin).